A 121-amino-acid polypeptide reads, in one-letter code: MARIEGIDLPRDKRIVIGLTYIYGIGNTSAQKILAEAGVSEDVRVRDLTPDQEDKIRAVVDGYKTEGDLRREVSLNIKLLQEIGSYRGMRHRRGLPVRGQHTKNNARTRKGKKVSIAGRKK.

The segment at 90–121 is disordered; that stretch reads RHRRGLPVRGQHTKNNARTRKGKKVSIAGRKK.

The protein belongs to the universal ribosomal protein uS13 family. In terms of assembly, part of the 30S ribosomal subunit. Forms a loose heterodimer with protein S19. Forms two bridges to the 50S subunit in the 70S ribosome.

Functionally, located at the top of the head of the 30S subunit, it contacts several helices of the 16S rRNA. In the 70S ribosome it contacts the 23S rRNA (bridge B1a) and protein L5 of the 50S subunit (bridge B1b), connecting the 2 subunits; these bridges are implicated in subunit movement. Contacts the tRNAs in the A and P-sites. This is Small ribosomal subunit protein uS13 from Lactiplantibacillus plantarum (strain ATCC BAA-793 / NCIMB 8826 / WCFS1) (Lactobacillus plantarum).